The following is a 568-amino-acid chain: Protein yellow (568 aa).

The N-terminal stretch at Met-1–Ala-28 is a signal peptide. Residues Asn-151 and Asn-222 are each glycosylated (N-linked (GlcNAc...) asparagine).

It belongs to the major royal jelly protein family.

It is found in the secreted. Its function is as follows. Controls the pigmentation pattern of the adult cuticle and larval mouth parts. The polypeptide is Protein yellow (y) (Drosophila subobscura (Fruit fly)).